The sequence spans 1141 residues: cGMP-inhibited 3',5'-cyclic phosphodiesterase 3A (1141 aa).

The interval 1-41 (MAVRGEAAQDWAKPGLRGPSPAPVARGDHRCRGGSPSSPRG) is disordered. A helical transmembrane segment spans residues 62–82 (SALCAGSLSVLLALLVRLVGG). The tract at residues 89 to 111 (ESSQEAAAEEEEEEGARGGVFPG) is disordered. 5 helical membrane passes run 127 to 147 (LQPA…GLCL), 157 to 177 (AVAL…SLGV), 182 to 202 (LLSL…TWLV), 207 to 227 (LGVL…VSLE), and 229 to 249 (FKVA…LLLA). A disordered region spans residues 262–309 (PAPPRERFGSQSSARTKEEIPGWKRRRRSSSVVAGEMSGCGGKSHRRT). A Phosphoserine modification is found at S310. Low complexity predominate over residues 433–445 (RVSSTWTTTTSAT). Positions 433–479 (RVSSTWTTTTSATGLPTLEPAPVRRDRSASIKPHEAPSPSAVNPDSW) are disordered. Residues 454-467 (PVRRDRSASIKPHE) are compositionally biased toward basic and acidic residues. Phosphoserine is present on residues S492, S520, S524, and S533. Residues 504–643 (HVKAKKQNRP…SDILQNDEEA (140 aa)) are disordered. The segment covering 522 to 532 (VPSPSSSPPQG) has biased composition (pro residues). Positions 618-637 (TSQVTSDYETNNNSDSSDIL) are enriched in polar residues. The segment at 669 to 1141 (KPILAPEPLV…EETLAPQPDL (473 aa)) is interaction with SLFN12. The PDEase domain occupies 674–1093 (PEPLVMDNLD…MMWKKVIEEE (420 aa)). H752 (proton donor) is an active-site residue. Residue H752 coordinates AMP. Mn(2+)-binding residues include H756, H836, D837, and D950. 3 residues coordinate AMP: D837, D950, and Q1001. A Mg(2+)-binding site is contributed by D837. Disordered regions lie at residues 1024–1062 (GKWV…EAPR) and 1098–1141 (GTEN…QPDL). Residues 1029 to 1046 (DSDDSGDTDDPEEEEEEA) are compositionally biased toward acidic residues. At S1033 the chain carries Phosphoserine. Residue T1036 is modified to Phosphothreonine. Residues 1098 to 1113 (GTENQAPDQAPLQHSS) are compositionally biased toward polar residues. K1120 is covalently cross-linked (Glycyl lysine isopeptide (Lys-Gly) (interchain with G-Cter in SUMO2)).

It belongs to the cyclic nucleotide phosphodiesterase family. PDE3 subfamily. As to quaternary structure, homodimer. Interacts with PDE3A; direct low affinity interaction which is stimulated by binding of 17beta-estradiol/E2 to PDE3A and that positively regulates the ribonuclease activity of SLFN12. Mn(2+) serves as cofactor. Mg(2+) is required as a cofactor.

Its subcellular location is the membrane. It is found in the cytoplasm. It localises to the cytosol. The enzyme catalyses a nucleoside 3',5'-cyclic phosphate + H2O = a nucleoside 5'-phosphate + H(+). It catalyses the reaction 3',5'-cyclic AMP + H2O = AMP + H(+). It carries out the reaction 3',5'-cyclic GMP + H2O = GMP + H(+). The catalysed reaction is 3',5'-cyclic UMP + H2O = UMP + H(+). Its function is as follows. Cyclic nucleotide phosphodiesterase with specificity for the second messengers cAMP and cGMP, which are key regulators of many important physiological processes. Also has activity toward cUMP. Independently of its catalytic activity it is part of an E2/17beta-estradiol-induced pro-apoptotic signaling pathway. E2 stabilizes the PDE3A/SLFN12 complex in the cytosol, promoting the dephosphorylation of SLFN12 and activating its pro-apoptotic ribosomal RNA/rRNA ribonuclease activity. This apoptotic pathway might be relevant in tissues with high concentration of E2 and be for instance involved in placenta remodeling. The polypeptide is cGMP-inhibited 3',5'-cyclic phosphodiesterase 3A (Rattus norvegicus (Rat)).